The primary structure comprises 234 residues: Protein XNDC1N (234 aa).

The protein is Protein XNDC1N of Homo sapiens (Human).